A 45-amino-acid chain; its full sequence is Proteinase inhibitor IIA (45 aa).

3 cysteine pairs are disulfide-bonded: Cys10–Cys24, Cys14–Cys35, and Cys20–Cys43.

This sequence belongs to the protease inhibitor I20 (potato type II proteinase inhibitor) family.

Its subcellular location is the secreted. Its function is as follows. Inhibits trypsin strongly and chymotrypsin temporarily. The sequence is that of Proteinase inhibitor IIA from Solanum tuberosum (Potato).